A 127-amino-acid chain; its full sequence is Fluoride-specific ion channel FluC (127 aa).

The next 4 membrane-spanning stretches (helical) occupy residues 3 to 23 (ALLL…LLGV), 36 to 56 (GTFA…GGLA), 72 to 92 (VGAL…ALMI), and 101 to 121 (FAYS…GLLL). Na(+)-binding residues include glycine 76 and threonine 79.

This sequence belongs to the fluoride channel Fluc/FEX (TC 1.A.43) family.

The protein localises to the cell inner membrane. The catalysed reaction is fluoride(in) = fluoride(out). Na(+) is not transported, but it plays an essential structural role and its presence is essential for fluoride channel function. In terms of biological role, fluoride-specific ion channel. Important for reducing fluoride concentration in the cell, thus reducing its toxicity. In Phenylobacterium zucineum (strain HLK1), this protein is Fluoride-specific ion channel FluC.